A 218-amino-acid chain; its full sequence is uncharacterized protein (218 aa).

Residues A11 to S31 form a helical membrane-spanning segment.

Its subcellular location is the membrane. This is an uncharacterized protein from Escherichia coli (strain K12).